Here is a 429-residue protein sequence, read N- to C-terminus: Dihydroorotase (429 aa).

2 residues coordinate Zn(2+): His59 and His61. Residues 61–63 (HLR) and Asn93 each bind substrate. The Zn(2+) site is built by Lys143, His171, His229, and Asp298. Residue Lys143 is modified to N6-carboxylysine. Asp298 is an active-site residue. Residues His302 and 316–317 (AG) contribute to the substrate site.

Belongs to the metallo-dependent hydrolases superfamily. DHOase family. Class I DHOase subfamily. It depends on Zn(2+) as a cofactor.

The catalysed reaction is (S)-dihydroorotate + H2O = N-carbamoyl-L-aspartate + H(+). It functions in the pathway pyrimidine metabolism; UMP biosynthesis via de novo pathway; (S)-dihydroorotate from bicarbonate: step 3/3. Functionally, catalyzes the reversible cyclization of carbamoyl aspartate to dihydroorotate. This is Dihydroorotase from Methanosphaera stadtmanae (strain ATCC 43021 / DSM 3091 / JCM 11832 / MCB-3).